Consider the following 201-residue polypeptide: ATP-dependent Clp protease proteolytic subunit (201 aa).

The active-site Nucleophile is serine 97. Histidine 122 is an active-site residue.

The protein belongs to the peptidase S14 family. In terms of assembly, fourteen ClpP subunits assemble into 2 heptameric rings which stack back to back to give a disk-like structure with a central cavity, resembling the structure of eukaryotic proteasomes.

It is found in the cytoplasm. It carries out the reaction Hydrolysis of proteins to small peptides in the presence of ATP and magnesium. alpha-casein is the usual test substrate. In the absence of ATP, only oligopeptides shorter than five residues are hydrolyzed (such as succinyl-Leu-Tyr-|-NHMec, and Leu-Tyr-Leu-|-Tyr-Trp, in which cleavage of the -Tyr-|-Leu- and -Tyr-|-Trp bonds also occurs).. Cleaves peptides in various proteins in a process that requires ATP hydrolysis. Has a chymotrypsin-like activity. Plays a major role in the degradation of misfolded proteins. This is ATP-dependent Clp protease proteolytic subunit from Nitratidesulfovibrio vulgaris (strain ATCC 29579 / DSM 644 / CCUG 34227 / NCIMB 8303 / VKM B-1760 / Hildenborough) (Desulfovibrio vulgaris).